A 170-amino-acid polypeptide reads, in one-letter code: Phosphopantetheine adenylyltransferase (170 aa).

Residue Thr-10 participates in substrate binding. Residues 10 to 11 (TF) and His-18 contribute to the ATP site. Residues Lys-42, Leu-75, and Arg-89 each coordinate substrate. Residues 90–92 (GVR), Glu-100, and 125–131 (YTYVASS) contribute to the ATP site.

It belongs to the bacterial CoaD family. As to quaternary structure, homohexamer. Mg(2+) serves as cofactor.

Its subcellular location is the cytoplasm. The enzyme catalyses (R)-4'-phosphopantetheine + ATP + H(+) = 3'-dephospho-CoA + diphosphate. It participates in cofactor biosynthesis; coenzyme A biosynthesis; CoA from (R)-pantothenate: step 4/5. In terms of biological role, reversibly transfers an adenylyl group from ATP to 4'-phosphopantetheine, yielding dephospho-CoA (dPCoA) and pyrophosphate. This chain is Phosphopantetheine adenylyltransferase, found in Chlorobium limicola (strain DSM 245 / NBRC 103803 / 6330).